The sequence spans 620 residues: DNA mismatch repair protein MutL (620 aa).

The segment at Ser353–Gly375 is disordered.

Belongs to the DNA mismatch repair MutL/HexB family.

Its function is as follows. This protein is involved in the repair of mismatches in DNA. It is required for dam-dependent methyl-directed DNA mismatch repair. May act as a 'molecular matchmaker', a protein that promotes the formation of a stable complex between two or more DNA-binding proteins in an ATP-dependent manner without itself being part of a final effector complex. In Chelativorans sp. (strain BNC1), this protein is DNA mismatch repair protein MutL.